Here is a 72-residue protein sequence, read N- to C-terminus: UPF0352 protein Patl_3379 (72 aa).

Belongs to the UPF0352 family.

The chain is UPF0352 protein Patl_3379 from Pseudoalteromonas atlantica (strain T6c / ATCC BAA-1087).